The chain runs to 1174 residues: MNATDAESRKPENKPSSESSSSGSTSGSSDGEVSSKTYFKNNKSKVLSGQREVVLEVVRDLSYTICKEAEEKLVERFPRKDGSNEMLPKEDSINTNHNYTTDSNEHPVELTTKTEECKNTEKTKKKSFVRALSKDKQLSAYRSRSRSTRLSYSGHISRTHSVEKSLSRYKKSVLRSRRTSFGHGRDSSTTKRSVSRDKDNRLRRRIGSSRSHTRSHSRFRRSEKKLPSRSPRRIRSQERRHERRRSMSSDYERIALRRSEPIKRRDKDEFFKNNKKVSGDIKKGKGNDNGTVAELEAKITERQRKSLDILTSRTGGACLTPDKLRMIQAEITDKSSAAYQSIAREALKKYIHGYINKVNVDSVAVITRKLLKDNIVRGRGVLCHSIIQAQATSPTFTHVYAAMVAIINSKFPNIGELLLKRLVIQFKRAFGCNDKTVCLTSSHFIAHLVNQRVAHEILALEILTLLIESPTDDNVEVAITFLKECGMKLTEVSSDRVGGIFELLKNILHQGKLDKRVQYMIKVLFQVRRDGFKDHQSIIESLELVEEYAQFTHLLLLEDVTYPKDILNEFKFDDQYETNEEKYKALSKNILGSHASDSDGSFGSGSNSETALSDCDKGKNEVNDKYTSGDIIDETKPNLIALRRTIYLTLNSCLDYEECAQKLMKMQLKTCQQNEFCQILLDCCAEQRTYEKFYGLLTHRICKMNKSFIEPFKEIFKDICQTTHCLDTNRLRNISKFFAHLLFTDAISWDVLDCIKLTEDEAITSRCIFIKSFFQELVEYMGLYHFNKKLKTEVLAGTLAGLFPKDNPRNIRFSINFFTSIGLGGITNELCQLLKIAPKSAPSSSSSSSLSSELSAPSDDDSSSDSENKKKHKGKNKKMTKKKNPSKKKEKTKKIVGKNKIAAKNKTIKRRTDKDNSSSKDNFLKSESSSNESISLDSLSSELFAPSSYSSSESSNDSESKEKHKGKNKKMTKKKNPSNKREKTKKKLSKNKKAPNKNTKKRMTEKDISSSESSISESKSLNCSASNQNENEKRKKRVTSKSRTKRVKMFKQCQWVDADNQRDIKRKKRAEYRYEPLVYRKRNEECLKKGAPNCRKDNYGNRQNHEISQRHDSEIKRRREERKKRHHEKNHSREYKRSKLGLCQREYFLYMCCQFYYPCTFQCLCQNCHFTFYS.

The span at methionine 1–proline 15 shows a compositional bias: basic and acidic residues. Disordered stretches follow at residues methionine 1 to arginine 51, arginine 79 to leucine 110, and lysine 136 to serine 259. The segment covering serine 16 to serine 35 has biased composition (low complexity). Residues lysine 36–leucine 47 show a composition bias toward polar residues. Over residues arginine 79–serine 92 the composition is skewed to basic and acidic residues. The span at isoleucine 93–aspartate 102 shows a compositional bias: polar residues. Residues leucine 138–serine 153 show a composition bias toward low complexity. Basic residues predominate over residues serine 167–serine 180. Basic and acidic residues predominate over residues histidine 183–asparagine 200. The span at arginine 201–glutamate 223 shows a compositional bias: basic residues. Positions arginine 235 to serine 259 are enriched in basic and acidic residues. Residues lysine 348 to glycine 531 form the MIF4G domain. The segment covering aspartate 597–serine 608 has biased composition (low complexity). Positions aspartate 597–aspartate 616 are disordered. The MI domain maps to alanine 641–leucine 757. Positions serine 840–proline 857 are enriched in low complexity. Disordered stretches follow at residues serine 840–lysine 1045 and arginine 1095–arginine 1133. Residues lysine 869–lysine 909 are compositionally biased toward basic residues. A compositionally biased stretch (basic and acidic residues) spans arginine 910 to leucine 924. The span at serine 926–aspartate 957 shows a compositional bias: low complexity. Residues lysine 963–lysine 1001 show a composition bias toward basic residues. Residues serine 1010–serine 1020 show a composition bias toward low complexity. The span at arginine 1034 to lysine 1045 shows a compositional bias: basic residues. Basic and acidic residues predominate over residues arginine 1095–arginine 1118. Positions arginine 1119–asparagine 1130 are enriched in basic residues.

Belongs to the CWC22 family. As to quaternary structure, component of the spliceosome C complex.

Its subcellular location is the nucleus speckle. In terms of biological role, male determiner protein (M-factor) that controls male somatic sexual differentiation. Acts as a dominant factor that regulates the mRNA splicing of transformer (tra) and doublesex (dsx) transcripts and promotes expression of male splice forms of tra and dsx. Probably acts as a component of the spliceosome C complex required for mRNA splicing factor and exon-junction complex (EJC) assembly. Hinders eIF4AIII from non-specifically binding RNA and escorts it to the splicing machinery to promote EJC assembly on mature mRNAs. The chain is Male determiner protein Mdmd(V) from Musca domestica (House fly).